A 914-amino-acid chain; its full sequence is Solute carrier family 12 member 9 (914 aa).

Topologically, residues 1–36 (MASESSPLLAYRLLGEEGVALPANGAGGPGGASARK) are cytoplasmic. Serine 6 bears the Phosphoserine mark. The helical transmembrane segment at 37–57 (LSTFLGVVVPTVLSMFSIVVF) threads the bilayer. The Extracellular segment spans residues 58–72 (LRIGFVVGHAGLLQA). The helical transmembrane segment at 73-93 (LAMLLVAYFILALTVLSVCAI) threads the bilayer. The Cytoplasmic portion of the chain corresponds to 94–119 (ATNGAVQGGGAYFMISRTLGPEVGGS). The helical transmembrane segment at 120 to 140 (IGLMFYLANVCGCAVSLLGLV) threads the bilayer. The Extracellular segment spans residues 141–167 (ESVLDVFGADATGPSGLRVLPQGYGWN). A helical transmembrane segment spans residues 168–188 (LLYGSLLLGLVGGVCTLGAGL). Residues 189–193 (YARAS) lie on the Cytoplasmic side of the membrane. Residues 194–214 (FLTFLLVSGSLASVLISFVAV) traverse the membrane as a helical segment. Residues 215–262 (GPRDIRLTPRPGPNGSSLPPRFGHFTGFNSSTLKDNLGAGYAEDYTTG) lie on the Extracellular side of the membrane. Residues asparagine 228 and asparagine 243 are each glycosylated (N-linked (GlcNAc...) asparagine). The helical transmembrane segment at 263-283 (AVMNFASVFAVLFNGCTGIMA) threads the bilayer. The Cytoplasmic segment spans residues 284 to 297 (GANMSGELKDPSRA). A helical transmembrane segment spans residues 298-318 (IPLGTIVAVAYTFFVYVLLFF). At 319–338 (LSSFTCDRTLLQEDYGFFRA) the chain is on the extracellular side. A helical membrane pass occupies residues 339–359 (ISLWPPLVLIGIYATALSASM). Topologically, residues 360–390 (SSLIGASRILHALARDDLFGVILAPAKVVSR) are cytoplasmic. The chain crosses the membrane as a helical span at residues 391-411 (GGNPWAAVLYSWGLVQLVLLA). The Extracellular segment spans residues 412–416 (GKLNT). A helical transmembrane segment spans residues 417–437 (LAAVVTVFYLVAYAAVDLSCL). Topologically, residues 438-466 (SLEWASAPNFRPTFSLFSWHTCLLGVASC) are cytoplasmic. A helical transmembrane segment spans residues 467 to 487 (LLMMFLISPGAAGGSLLLMGL). The Extracellular portion of the chain corresponds to 488 to 740 (LAALLTARGG…LLRPRGGPGY (253 aa)). The disordered stretch occupies residues 642–678 (LTDPAFSEPADSTREGSSPALSTLFPPPRAPGSPRAL). The chain crosses the membrane as a helical span at residues 741–761 (VDVCGLFLLQMATILGMVPAW). At 762-914 (HSARLRIFLC…GVTPVTCTDL (153 aa)) the chain is on the cytoplasmic side. The disordered stretch occupies residues 844 to 863 (QQGRGTGGGPGGPEGGDAEG). A compositionally biased stretch (gly residues) spans 847 to 858 (RGTGGGPGGPEG).

Belongs to the SLC12A transporter family. Interacts with SLC12A1. Highly expressed in placenta, brain and kidney. Lower expression in lung, liver and heart.

The protein localises to the cell membrane. Its subcellular location is the lysosome membrane. Its function is as follows. May be an inhibitor of SLC12A1. Seems to correspond to a subunit of a multimeric transport system and thus, additional subunits may be required for its function. May play a role in lysosomal ion flux and osmoregulation. This is Solute carrier family 12 member 9 (SLC12A9) from Homo sapiens (Human).